The following is a 619-amino-acid chain: Dihydroxy-acid dehydratase (619 aa).

Position 81 (D81) interacts with Mg(2+). [2Fe-2S] cluster is bound at residue C122. Residues D123 and K124 each coordinate Mg(2+). Position 124 is an N6-carboxylysine (K124). C195 is a binding site for [2Fe-2S] cluster. A Mg(2+)-binding site is contributed by E491. The active-site Proton acceptor is S517.

This sequence belongs to the IlvD/Edd family. Homodimer. Requires [2Fe-2S] cluster as cofactor. Mg(2+) serves as cofactor.

It catalyses the reaction (2R)-2,3-dihydroxy-3-methylbutanoate = 3-methyl-2-oxobutanoate + H2O. The enzyme catalyses (2R,3R)-2,3-dihydroxy-3-methylpentanoate = (S)-3-methyl-2-oxopentanoate + H2O. Its pathway is amino-acid biosynthesis; L-isoleucine biosynthesis; L-isoleucine from 2-oxobutanoate: step 3/4. It functions in the pathway amino-acid biosynthesis; L-valine biosynthesis; L-valine from pyruvate: step 3/4. Its function is as follows. Functions in the biosynthesis of branched-chain amino acids. Catalyzes the dehydration of (2R,3R)-2,3-dihydroxy-3-methylpentanoate (2,3-dihydroxy-3-methylvalerate) into 2-oxo-3-methylpentanoate (2-oxo-3-methylvalerate) and of (2R)-2,3-dihydroxy-3-methylbutanoate (2,3-dihydroxyisovalerate) into 2-oxo-3-methylbutanoate (2-oxoisovalerate), the penultimate precursor to L-isoleucine and L-valine, respectively. This is Dihydroxy-acid dehydratase from Sphingopyxis alaskensis (strain DSM 13593 / LMG 18877 / RB2256) (Sphingomonas alaskensis).